The following is a 460-amino-acid chain: Serine incorporator 5 (460 aa).

The Extracellular segment spans residues 1–36 (MSARCCAGQLACCCGSAGCALCCGCCPKFRQSRSTR). The chain crosses the membrane as a helical span at residues 37-57 (FMYLFYFTLVIIPCCVMMSPS). The Cytoplasmic segment spans residues 58–89 (VMKQMTEHIPFFEDFCKGIKAGDTCENLVGYS). Residues 90–110 (AVYRVCFGMACFFFVFCVLTF) form a helical membrane-spanning segment. Residues 111–124 (KVNNSKSCRASIHN) are Extracellular-facing. The N-linked (GlcNAc...) asparagine glycan is linked to Asn113. A helical membrane pass occupies residues 125 to 145 (GFWFFKLLLLGAMCSGAFFIP). The Cytoplasmic segment spans residues 146–156 (DQETFLNVWRY). Residues 157-177 (VGAVGSFFFICIQLLLIVEFA) traverse the membrane as a helical segment. The Extracellular segment spans residues 178–197 (HKWNKNWTAGTVRNKLWYAS). An N-linked (GlcNAc...) asparagine glycan is attached at Asn183. The helical transmembrane segment at 198 to 218 (LSLALIMYSIAVGGLALMAVF) threads the bilayer. Residues 219–229 (YTQWDDCMDNK) are Cytoplasmic-facing. A helical transmembrane segment spans residues 230–250 (ILLGVHGGLCVLISLAAISPC). Over 251-258 (VQNRQPHS) the chain is Extracellular. Residues 259 to 279 (GLLQPGLISCYVTYLTFSALT) traverse the membrane as a helical segment. Topologically, residues 280 to 309 (SKPEKVVKDEHGKNVTICVPDFGQDFRRDE) are cytoplasmic. A helical membrane pass occupies residues 310–330 (SMVTWLGTLLLVVCISYSCLT). The Extracellular segment spans residues 331–390 (STTRSSSDALQRRYGAPELEVARCCFCFGPDGEDTEEQQNVKEGPRVIYDEKKGTVYSYS). The helical transmembrane segment at 391 to 411 (YFHFVLLLASLYVMMTLTSWF) threads the bilayer. Residues 412–427 (HYENATIETFFVGSWS) are Cytoplasmic-facing. Residues 428 to 448 (IFWVKMASCWMCVLLYLWTLV) form a helical membrane-spanning segment. The Extracellular portion of the chain corresponds to 449-460 (APLCCPSRQFSV).

Belongs to the TDE1 family. As to expression, brain. Expressed at high levels in the white matter and the oligodendroglial cells of the brain. Expressed at low levels in the liver.

It is found in the cell membrane. It carries out the reaction a 1,2-diacyl-sn-glycero-3-phospho-L-serine(in) = a 1,2-diacyl-sn-glycero-3-phospho-L-serine(out). The catalysed reaction is a 1,2-diacyl-sn-glycero-3-phosphocholine(in) = a 1,2-diacyl-sn-glycero-3-phosphocholine(out). It catalyses the reaction a 1,2-diacyl-sn-glycero-3-phosphoethanolamine(in) = a 1,2-diacyl-sn-glycero-3-phosphoethanolamine(out). Functionally, restriction factor required to restrict infectivity of gammaretroviruses: acts by inhibiting an early step of viral infection. Impairs the penetration of the viral particle into the cytoplasm. Non-ATP-dependent, non-specific lipid transporter for phosphatidylserine, phosphatidylcholine, and phosphatidylethanolamine. Functions as a scramblase that flips lipids in both directions across the membrane. Phospholipid scrambling results in gammaretroviral surface exposure of phosphatidylserine and loss of membrane asymmetry, which leads to loss of infectivity. Enhances the incorporation of serine into phosphatidylserine and sphingolipids. May play a role in providing serine molecules for the formation of myelin glycosphingolipids in oligodendrocytes. The sequence is that of Serine incorporator 5 (Serinc5) from Rattus norvegicus (Rat).